The chain runs to 438 residues: Cell division cycle-associated 7-like protein (438 aa).

The Integrase domain-binding motif 1 (IBM1) signature appears at 9-33 (IPKEVADIFSAPSDDEEFVGFQDDV). A Phosphoserine modification is found at Ser-21. Positions 56–115 (VCFRSKYFTEELRRIFKEDTDSEMEDFEGFTESELNMSSNPELMESELSDSDKAYPVMND) are PSIP1-binding. An Integrase domain-binding motif 2 (IBM2) motif is present at residues 63–89 (FTEELRRIFKEDTDSEMEDFEGFTESE). The interval 74–199 (DTDSEMEDFE…ESRAESQENS (126 aa)) is disordered. A Phosphothreonine modification is found at Thr-75. Over residues 75-86 (TDSEMEDFEGFT) the composition is skewed to acidic residues. Ser-77 carries the phosphoserine modification. Thr-86 carries the post-translational modification Phosphothreonine. Phosphoserine occurs at positions 101, 104, 135, 136, and 159. A compositionally biased stretch (basic and acidic residues) spans 152-167 (RTPDKDSSHLLDSKTD). Residues 168–177 (LRRKKSSRQP) show a composition bias toward basic residues. 2 positions are modified to phosphoserine: Ser-183 and Ser-185. The MYC-binding stretch occupies residues 201–223 (ALLKRAMNIKENKAMLAQLLAEL). Residues Lys-210 and Lys-213 each participate in a glycyl lysine isopeptide (Lys-Gly) (interchain with G-Cter in SUMO2) cross-link. Residue Ser-249 is modified to Phosphoserine.

As to quaternary structure, interacts with MYC. Interacts (via IBM motifs) with PSIP1 (via IBD domain); phosphorylation increases its affinity for PSIP1. Post-translationally, phosphorylation increases its interaction with PSIP1. In terms of tissue distribution, expressed in all tissues but not detected in total brain.

Its subcellular location is the cytoplasm. The protein resides in the nucleus. Plays a role in transcriptional regulation as a repressor that inhibits monoamine oxidase A (MAOA) activity and gene expression by binding to the promoter. Plays an important oncogenic role in mediating the full transforming effect of MYC in medulloblastoma cells. Involved in apoptotic signaling pathways; May act downstream of P38-kinase and BCL-2, but upstream of CASP3/caspase-3 as well as CCND1/cyclin D1 and E2F1. The chain is Cell division cycle-associated 7-like protein (Cdca7l) from Mus musculus (Mouse).